Here is a 562-residue protein sequence, read N- to C-terminus: Arginine--tRNA ligase (562 aa).

The 'HIGH' region signature appears at P121–H131.

Belongs to the class-I aminoacyl-tRNA synthetase family. As to quaternary structure, monomer.

Its subcellular location is the cytoplasm. It catalyses the reaction tRNA(Arg) + L-arginine + ATP = L-arginyl-tRNA(Arg) + AMP + diphosphate. This chain is Arginine--tRNA ligase, found in Limosilactobacillus reuteri (strain DSM 20016) (Lactobacillus reuteri).